We begin with the raw amino-acid sequence, 518 residues long: D-aminopeptidase (518 aa).

The Nucleophile role is filled by Ser62. The active-site Proton donor/acceptor is Lys65. An important for specificity region spans residues 477-487 (QRSMDAPSPGE). Position 481 (Asp481) interacts with substrate.

Belongs to the peptidase S12 family. In terms of assembly, homodimer.

It carries out the reaction Release of an N-terminal D-amino acid from a peptide, Xaa-|-Yaa-, in which Xaa is preferably D-Ala, D-Ser or D-Thr. D-amino acid amides and methyl esters also are hydrolyzed, as is glycine amide.. Inhibited by beta-lactam compounds such as 6-aminopenicillic acid, 7-aminocephalosporanic acid, benzylpenicillin and ampicillin. Inhibited by p-chloromercuribenzoate. In terms of biological role, hydrolyzes N-terminal residues in D-amino acid-containing peptides. This is D-aminopeptidase from Brucella ovis (strain ATCC 25840 / 63/290 / NCTC 10512).